The primary structure comprises 254 residues: Probable triosephosphate isomerase 2 (254 aa).

Residue 9–11 participates in substrate binding; the sequence is NMK. Histidine 96 acts as the Electrophile in catalysis. The Proton acceptor role is filled by glutamate 168. 2 residues coordinate substrate: glycine 174 and serine 212.

The protein belongs to the triosephosphate isomerase family. In terms of assembly, homodimer.

The protein resides in the cytoplasm. The enzyme catalyses D-glyceraldehyde 3-phosphate = dihydroxyacetone phosphate. The protein operates within carbohydrate biosynthesis; gluconeogenesis. Its pathway is carbohydrate degradation; glycolysis; D-glyceraldehyde 3-phosphate from glycerone phosphate: step 1/1. Functionally, involved in the gluconeogenesis. Catalyzes stereospecifically the conversion of dihydroxyacetone phosphate (DHAP) to D-glyceraldehyde-3-phosphate (G3P). In Listeria monocytogenes serotype 4b (strain F2365), this protein is Probable triosephosphate isomerase 2.